A 366-amino-acid chain; its full sequence is Histidinol-phosphate aminotransferase (366 aa).

Lys226 carries the post-translational modification N6-(pyridoxal phosphate)lysine.

This sequence belongs to the class-II pyridoxal-phosphate-dependent aminotransferase family. Histidinol-phosphate aminotransferase subfamily. The cofactor is pyridoxal 5'-phosphate.

It carries out the reaction L-histidinol phosphate + 2-oxoglutarate = 3-(imidazol-4-yl)-2-oxopropyl phosphate + L-glutamate. The protein operates within amino-acid biosynthesis; L-histidine biosynthesis; L-histidine from 5-phospho-alpha-D-ribose 1-diphosphate: step 7/9. The protein is Histidinol-phosphate aminotransferase of Methanosarcina barkeri (strain Fusaro / DSM 804).